A 466-amino-acid chain; its full sequence is MAKTLYEKLFDAHVVFEAPNETPLLYIDRHLVHEVTSPQAFDGLRAHHRPVRQPGKTFATMDHNVSTQTKDINASGEMARIQMQELIKNCNEFGVELYDLNHPYQGIVHVMGPEQGVTLPGMTIVCGDSHTATHGAFGALAFGIGTSEVEHVLATQTLKQGRAKTMKIEVTGNAAPGITAKDIVLAIIGKTGSAGGTGHVVEFCGDAIRALSMEGRMTLCNMAIEMGAKAGLVAPDETTFNYVKGRLHAPKGRDFDEAVEYWKTLKTDDGATFDTVVTLRAEEIAPQVTWGTNPGQVISVTDIIPDPASFSDPVERASAEKALAYMGLQPGVPLTDVAIDKVFIGSCTNSRIEDLRAAAEVAKGRKVAPGVQALVVPGSGPVKAQAEAEGLDKIFIEAGFEWRLPGCSMCLAMNNDRLNPGERCASTSNRNFEGRQGRGGRTHLVSPAMAAAAAVTGHFADIRSIK.

The [4Fe-4S] cluster site is built by Cys347, Cys407, and Cys410.

It belongs to the aconitase/IPM isomerase family. LeuC type 1 subfamily. As to quaternary structure, heterodimer of LeuC and LeuD. [4Fe-4S] cluster is required as a cofactor.

It catalyses the reaction (2R,3S)-3-isopropylmalate = (2S)-2-isopropylmalate. It functions in the pathway amino-acid biosynthesis; L-leucine biosynthesis; L-leucine from 3-methyl-2-oxobutanoate: step 2/4. Functionally, catalyzes the isomerization between 2-isopropylmalate and 3-isopropylmalate, via the formation of 2-isopropylmaleate. This chain is 3-isopropylmalate dehydratase large subunit 1, found in Salmonella choleraesuis (strain SC-B67).